The sequence spans 1537 residues: Flocculation protein FLO1 (1537 aa).

The first 24 residues, 1 to 24 (MTMPHRYMFLAVFTLLALTSVASG), serve as a signal peptide directing secretion. In terms of domain architecture, PA14 spans 74–249 (GGQTDISIDY…GTTVSDDFEG (176 aa)). Residues Asn-135 and Asn-187 are each glycosylated (N-linked (GlcNAc...) asparagine). Residues 197–240 (GGSLPPNIEGTVYMYAGYYYPMKVVYSNAVSWGTLPISVTLPDG) form a sugar recognition region. Residue Asn-262 is glycosylated (N-linked (GlcNAc...) asparagine). A run of 18 repeats spans residues 278–322 (TTTE…STII), 323–367 (TTTE…TTAI), 368–412 (TTTE…TTAM), 413–457 (TTTQ…TTAM), 458–502 (TTTQ…TTAM), 503–547 (TTTQ…TTAM), 548–592 (TTPQ…TTAI), 593–637 (TTTE…TTAI), 638–682 (TTTQ…TTAM), 683–727 (TTTQ…TTAM), 728–772 (TTTQ…GLIS), 773–817 (TTTE…GLVT), 818–862 (TTTE…GLIS), 863–907 (TTTE…GLIS), 908–952 (TTTE…GLIS), 953–997 (TTTE…GLIS), 998–1042 (TTTE…GLVT), and 1043–1087 (TTTE…ISSS). Residues 278–1087 (TTTEPWTGTF…KTPTTAISSS (810 aa)) form an 18 X 45 AA approximate tandem repeats, Thr-rich region. Asn-329, Asn-374, Asn-419, Asn-464, Asn-509, Asn-554, Asn-599, Asn-644, Asn-689, and Asn-734 each carry an N-linked (GlcNAc...) asparagine glycan. Disordered regions lie at residues 770-799 (LIST…NGQP) and 860-889 (LIST…NGQP). Low complexity predominate over residues 773–795 (TTTEPWTGTFTSTSTEMTTVTGT). Over residues 863–885 (TTTEPWTGTFTSTSTEMTTITGT) the composition is skewed to low complexity. The interval 995 to 1024 (LISTTTEPWTGTFTSTSTEMTTVTGTNGQP) is disordered. A compositionally biased stretch (low complexity) spans 998 to 1020 (TTTEPWTGTFTSTSTEMTTVTGT). The N-linked (GlcNAc...) asparagine glycan is linked to Asn-1114. A run of 2 repeats spans residues 1118 to 1137 (VISS…TSSP) and 1138 to 1157 (VISS…IFSE). The segment at 1118-1157 (VISSSVISSSVTSSLFTSSPVISSSVISSSTTTSTSIFSE) is 2 X 20 AA approximate tandem repeats, Ser/Thr-rich. Residues 1161 to 1220 (SSVIPTSSSTSGSSESETSSAGSVSSSSFISSESSKSPTYSSSSLPLVTSATTSQETASS) are compositionally biased toward low complexity. The interval 1161 to 1232 (SSVIPTSSST…PATTTKTSEQ (72 aa)) is disordered. Over residues 1222–1232 (PPATTTKTSEQ) the composition is skewed to polar residues. 6 consecutive repeat copies span residues 1226–1276 (TTKT…CPIS), 1291–1341 (TTET…CPIS), 1342–1392 (TTES…RPQT), 1408–1416 (ETTTNTLAA), 1417–1425 (ETTTNTVAA), and 1426–1434 (ETITNTGAA). Residues 1226 to 1392 (TTKTSEQTTL…TVYPTWRPQT (167 aa)) are 3 X 51 AA approximate repeats, Ser/Thr-rich. A compositionally biased stretch (polar residues) spans 1392 to 1404 (TANEESVSSKMNS). Positions 1392-1414 (TANEESVSSKMNSATGETTTNTL) are disordered. The span at 1405–1414 (ATGETTTNTL) shows a compositional bias: low complexity. The segment at 1408 to 1434 (ETTTNTLAAETTTNTVAAETITNTGAA) is 3 X 9 AA approximate tandem repeats, Thr-rich. A disordered region spans residues 1468-1497 (VSVSETGNTKSLTSSGLSTMSQQPRSTPAS). Polar residues predominate over residues 1472–1497 (ETGNTKSLTSSGLSTMSQQPRSTPAS). The GPI-anchor amidated glycine moiety is linked to residue Gly-1514. Positions 1515 to 1537 (SANSLLAGSGLSVFIASLLLAII) are cleaved as a propeptide — removed in mature form.

The protein belongs to the flocculin family. In terms of processing, extensively N- and O-glycosylated. The GPI-anchor is attached to the protein in the endoplasmic reticulum and serves to target the protein to the cell surface. There, the glucosamine-inositol phospholipid moiety is cleaved off and the GPI-modified mannoprotein is covalently attached via its lipidless GPI glycan remnant to the 1,6-beta-glucan of the outer cell wall layer.

Its subcellular location is the cell membrane. It localises to the secreted. The protein localises to the cell wall. Its function is as follows. Cell wall protein that participates directly in adhesive cell-cell interactions during yeast flocculation, a reversible, asexual and Ca(2+)-dependent process in which cells adhere to form aggregates (flocs) consisting of thousands of cells. The lectin-like protein sticks out of the cell wall of flocculent cells and selectively binds mannose residues in the cell walls of adjacent cells. Activity is inhibited by mannose, but not by glucose, maltose, sucrose or galactose. Also involved in cell-substrate adhesion. This chain is Flocculation protein FLO1 (FLO1), found in Saccharomyces cerevisiae (strain ATCC 204508 / S288c) (Baker's yeast).